We begin with the raw amino-acid sequence, 145 residues long: Probable 4-amino-4-deoxy-L-arabinose-phosphoundecaprenol flippase subunit ArnF (145 aa).

Topologically, residues M1–H3 are cytoplasmic. Residues L4–A24 traverse the membrane as a helical segment. Residues Q25–P61 are Periplasmic-facing. The helical transmembrane segment at V62 to A82 threads the bilayer. Residues L83 to S89 lie on the Cytoplasmic side of the membrane. Residues I90–P110 form a helical membrane-spanning segment. Over W111–E114 the chain is Periplasmic. A helical membrane pass occupies residues P115–L135. At P136–S145 the chain is on the cytoplasmic side.

This sequence belongs to the ArnF family. In terms of assembly, heterodimer of ArnE and ArnF.

It localises to the cell inner membrane. It participates in bacterial outer membrane biogenesis; lipopolysaccharide biosynthesis. In terms of biological role, translocates 4-amino-4-deoxy-L-arabinose-phosphoundecaprenol (alpha-L-Ara4N-phosphoundecaprenol) from the cytoplasmic to the periplasmic side of the inner membrane. In Shewanella sediminis (strain HAW-EB3), this protein is Probable 4-amino-4-deoxy-L-arabinose-phosphoundecaprenol flippase subunit ArnF.